The sequence spans 623 residues: DNA-directed RNA polymerase subunit beta' (623 aa).

The Zn(2+) site is built by cysteine 70, cysteine 72, cysteine 85, and cysteine 88. Positions 466, 468, and 470 each coordinate Mg(2+).

This sequence belongs to the RNA polymerase beta' chain family. RpoC1 subfamily. As to quaternary structure, in plastids the minimal PEP RNA polymerase catalytic core is composed of four subunits: alpha, beta, beta', and beta''. When a (nuclear-encoded) sigma factor is associated with the core the holoenzyme is formed, which can initiate transcription. It depends on Mg(2+) as a cofactor. Zn(2+) is required as a cofactor.

The protein localises to the plastid. It localises to the chloroplast. It catalyses the reaction RNA(n) + a ribonucleoside 5'-triphosphate = RNA(n+1) + diphosphate. Functionally, DNA-dependent RNA polymerase catalyzes the transcription of DNA into RNA using the four ribonucleoside triphosphates as substrates. The sequence is that of DNA-directed RNA polymerase subunit beta' from Guillardia theta (Cryptophyte).